We begin with the raw amino-acid sequence, 227 residues long: N-acetyltransferase 8 (227 aa).

Residues 1–35 are Cytoplasmic-facing; the sequence is MASFRIRQFQERDYKQVVDVFSRGMEEHIPTAFRH. Residues 36–56 form a helical; Signal-anchor for type II membrane protein membrane-spanning segment; that stretch reads LLTLPRTLLLLAVVPLAIVLV. Residues 57–227 lie on the Lumenal side of the membrane; sequence SGSWFLAVVC…PLPSAQKYEL (171 aa). The N-acetyltransferase domain occupies 69–217; that stretch reads FLFLFLWFLA…VDVSLIHFIY (149 aa).

Belongs to the NAT8 family. As to expression, expressed in brain (at protein level).

The protein resides in the endoplasmic reticulum-Golgi intermediate compartment membrane. It is found in the endoplasmic reticulum membrane. It catalyses the reaction L-lysyl-[protein] + acetyl-CoA = N(6)-acetyl-L-lysyl-[protein] + CoA + H(+). The enzyme catalyses an S-substituted L-cysteine + acetyl-CoA = an N-acetyl-L-cysteine-S-conjugate + CoA + H(+). The protein operates within sulfur metabolism; glutathione metabolism. Its function is as follows. Endoplasmic reticulum (ER)-membrane-bound lysine N-acetyltransferase catalyzing the N6-acetylation of lysine residues in the lumen of the ER in various proteins, including PROM1 and BACE1, using acetyl-CoA as acetyl donor. Thereby, may regulate apoptosis through the acetylation and the regulation of the expression of PROM1. May also regulate amyloid beta-peptide secretion through acetylation of BACE1 and the regulation of its expression in neurons. N(6)-lysine acetylation in the ER maintains protein homeostasis and regulates reticulophagy. Alternatively, acetylates the free alpha-amino group of cysteine S-conjugates to form mercapturic acids. This is the final step in a major route for detoxification of a wide variety of reactive electrophiles which starts with their incorporation into glutathione S-conjugates. The glutathione S-conjugates are then further processed into cysteine S-conjugates and finally mercapturic acids which are water soluble and can be readily excreted in urine or bile. This chain is N-acetyltransferase 8 (Nat8), found in Mus musculus (Mouse).